A 484-amino-acid polypeptide reads, in one-letter code: Ribosome biogenesis protein NOP53 (484 aa).

Disordered regions lie at residues 1-51 (MAAG…WRRL) and 304-356 (ESDG…AARK). Ala-2 is modified (N-acetylalanine). Ser-29 is modified (phosphoserine). Basic residues predominate over residues 35–49 (RRRRRGPRNKKRGWR). Positions 148–437 (KEELWEKLAK…SELSGSLRTL (290 aa)) are mediates interaction with CDKN2A/isoform tumor suppressor ARF. Ser-305 carries the phosphoserine modification. Basic and acidic residues predominate over residues 336–348 (PEKRMEKKTEQQR). The tract at residues 348-392 (RRREKAARKLRVQQAALRAARLQHQELFRLRGIKAQVARRLAELA) is mediates interaction with human herpesvirus 8 protein ORF16. 2 nucleolar localization signal regions span residues 353-401 (AARK…RRIR) and 402-484 (RLAE…EIQL).

Belongs to the NOP53 family. Homooligomer. Interacts with PTEN; regulates PTEN phosphorylation and increases its stability. Interacts with RPL11; retains RPL11 into the nucleolus. Interacts with CDKN2A/isoform tumor suppressor ARF; the interaction is direct and promotes ARF nucleoplasmic relocalization and ubiquitin-mediated proteasomal degradation. Interacts with NPM1; the interaction is direct and competitive with MYC. Interacts with NF2 (via FERM domain); the interaction is direct. Interacts with p53/TP53 (via the oligomerization region); the interaction is direct and may prevent the MDM2-mediated proteasomal degradation of p53/TP53. Interacts with RIGI; may regulate RIGI through USP15-mediated 'Lys-63'-linked deubiquitination. Interacts with UBTF. Post-translationally, ubiquitin-mediated proteasomal degradation is regulated by c-JUN. It is associated with relocalization to the nucleoplasm and decreased homooligomerization. Phosphorylated upon DNA damage probably by ATM and DNA-PK; may regulate NOP53 degradation.

The protein localises to the nucleus. The protein resides in the nucleolus. Its subcellular location is the nucleoplasm. Functionally, nucleolar protein which is involved in the integration of the 5S RNP into the ribosomal large subunit during ribosome biogenesis. In ribosome biogenesis, may also play a role in rRNA transcription. Also functions as a nucleolar sensor that regulates the activation of p53/TP53 in response to ribosome biogenesis perturbation, DNA damage and other stress conditions. DNA damage or perturbation of ribosome biogenesis disrupt the interaction between NOP53 and RPL11 allowing RPL11 transport to the nucleoplasm where it can inhibit MDM2 and allow p53/TP53 activation. It may also positively regulate the function of p53/TP53 in cell cycle arrest and apoptosis through direct interaction, preventing its MDM2-dependent ubiquitin-mediated proteasomal degradation. Originally identified as a tumor suppressor, it may also play a role in cell proliferation and apoptosis by positively regulating the stability of PTEN, thereby antagonizing the PI3K-AKT/PKB signaling pathway. May also inhibit cell proliferation and increase apoptosis through its interaction with NF2. May negatively regulate NPM1 by regulating its nucleoplasmic localization, oligomerization and ubiquitin-mediated proteasomal degradation. Thereby, may prevent NPM1 interaction with MYC and negatively regulate transcription mediated by the MYC-NPM1 complex. May also regulate cellular aerobic respiration. In the cellular response to viral infection, may play a role in the attenuation of interferon-beta through the inhibition of RIGI. This Mus musculus (Mouse) protein is Ribosome biogenesis protein NOP53.